Consider the following 290-residue polypeptide: tRNA(Ile)-lysidine synthase, chloroplastic (290 aa).

An ATP-binding site is contributed by 33–38; that stretch reads SGGQDS.

This sequence belongs to the tRNA(Ile)-lysidine synthase family.

Its subcellular location is the plastid. It is found in the chloroplast. It catalyses the reaction cytidine(34) in tRNA(Ile2) + L-lysine + ATP = lysidine(34) in tRNA(Ile2) + AMP + diphosphate + H(+). Its function is as follows. Ligates lysine onto the cytidine present at position 34 of the AUA codon-specific tRNA(Ile) that contains the anticodon CAU, in an ATP-dependent manner. Cytidine is converted to lysidine, thus changing the amino acid specificity of the tRNA from methionine to isoleucine. This chain is tRNA(Ile)-lysidine synthase, chloroplastic, found in Cyanidioschyzon merolae (strain NIES-3377 / 10D) (Unicellular red alga).